A 409-amino-acid polypeptide reads, in one-letter code: Ribose-phosphate pyrophosphokinase 1 (409 aa).

Mg(2+) contacts are provided by Asp128, His130, and Asp143. The residue at position 199 (Ser199) is a Phosphoserine.

It belongs to the ribose-phosphate pyrophosphokinase family.

The protein localises to the cytoplasm. It catalyses the reaction D-ribose 5-phosphate + ATP = 5-phospho-alpha-D-ribose 1-diphosphate + AMP + H(+). It functions in the pathway metabolic intermediate biosynthesis; 5-phospho-alpha-D-ribose 1-diphosphate biosynthesis; 5-phospho-alpha-D-ribose 1-diphosphate from D-ribose 5-phosphate (route I): step 1/1. Its function is as follows. 5-phosphoribose 1-diphosphate synthase involved in nucleotide, histidine, and tryptophan biosynthesis. Active in heteromultimeric complexes with other 5-phosphoribose 1-diphosphate synthases. The sequence is that of Ribose-phosphate pyrophosphokinase 1 from Schizosaccharomyces pombe (strain 972 / ATCC 24843) (Fission yeast).